A 409-amino-acid chain; its full sequence is uncharacterized protein (409 aa).

The first 29 residues, 1 to 29, serve as a signal peptide directing secretion; sequence MARSRCVHRVVHQAACIGVIGLSTSALTT. Cys-30 carries the N-palmitoyl cysteine lipid modification. Cys-30 carries the S-diacylglycerol cysteine lipid modification.

This sequence belongs to the TP013X lipoprotein family.

Its subcellular location is the cell membrane. This is an uncharacterized protein from Treponema pallidum (strain Nichols).